A 227-amino-acid polypeptide reads, in one-letter code: KH domain-containing protein MJ0443 (227 aa).

KH domains lie at 14–77 (KSIE…RDIV) and 106–163 (DYAS…KEAV).

The protein is KH domain-containing protein MJ0443 of Methanocaldococcus jannaschii (strain ATCC 43067 / DSM 2661 / JAL-1 / JCM 10045 / NBRC 100440) (Methanococcus jannaschii).